The chain runs to 859 residues: Paladin (859 aa).

A disordered region spans residues 1–34 (MGTTASTAQQTVSAGTSLEGLQGGSSSSMDSQHS). Glycine 2 is lipidated: N-myristoyl glycine. Serine 89 is modified (phosphoserine).

Belongs to the paladin family. Vascular expression detected in the central nervous system, kidney, lung, heart, skeletal muscle, white adipose tissue (WAT), brown adipose tissue, liver, pancreas and spleen. Not expressed in all vessels: for instance, not expressed in capillaries in the brain, and expressed mainly in large vessels in the heart, WAT, liver, pancreas and kidney. Predominant nonvascular expression in myocardium and lung mesenchyme. In large vessels, primarily expressed by smooth muscle cells, but occasionally detected at low levels in the endothelium. Expressed in various cells of the hematopoietic lineage.

The protein resides in the cytoplasm. It localises to the cytosol. The sequence is that of Paladin (Pald1) from Mus musculus (Mouse).